Reading from the N-terminus, the 219-residue chain is Transmembrane emp24 domain-containing protein 10 (219 aa).

A signal peptide spans 1–31 (MSGLSGPPTRRGPFPLALLLLFLLGPSLVLA). The segment at 1–142 (MSGLSGPPTR…KNYEEIAKVE (142 aa)) is required for interaction with STX17. Topologically, residues 32–185 (ISFHLPINSR…RDTNESTNTR (154 aa)) are lumenal. In terms of domain architecture, GOLD spans 41 to 193 (RKCLREEIHK…TRVLYFSIFS (153 aa)). Dimethylated arginine is present on residues R171 and R176. An N-linked (GlcNAc...) asparagine glycan is attached at N179. The chain crosses the membrane as a helical span at residues 186 to 206 (VLYFSIFSMFCLIGLATWQVF). Positions 204-219 (QVFYLRRFFKAKKLIE) are interaction with COPG1. The Cytoplasmic portion of the chain corresponds to 207-219 (YLRRFFKAKKLIE). Positions 207 to 219 (YLRRFFKAKKLIE) are interaction with ARF1 and IL1B. Positions 211-212 (FF) match the COPII vesicle coat-binding motif. The short motif at 211–219 (FFKAKKLIE) is the COPI vesicle coat-binding element.

Belongs to the EMP24/GP25L family. In terms of assembly, predominantly dimeric and to a lesser extent monomeric in the ER. Monomer and dimer in ERGIC and cis-Golgi network. Forms homooligomer (via GOLD domain); the assembly is promoted by direct binding with leaderless cargos and may form a protein channel that facilitates cargo entry into the ERGIC. Forms heterooligomeric complexes with other members of the p24 family such as TMED2, TMED7 and TMED9. Interacts (via GOLD domain) with TMED2 (via GOLD domain); the complex is required for export of TMED10 from the ER to the cis-Golgi network; the complex is proposed to be involved in cis-Golgi network dynamics and / or biogenesis. Associates with the COPI vesicle coat subunits (coatomer). Tetramerization of the cytoplasmic domain at the Golgi membrane in vitro; the complex is proposed to interact with COPI coatomer and induce budding of the vesicles. Interacts with COPG1; the interaction involves TMED10 homodimer. Interacts with ARF1 (GDP-bound); the interaction probably involves a TMED10 oligomer. Interacts with SEC23A, SEC24B, SEC24C and SEC24D components of the coat protein complex II/COPII, indicative of an association of TMED10 with the COPII vesicle coat. Interacts with CD59. Interacts with MPPE1/PGAP5; the complex might recruit and sort GPI-anchored proteins to the ER-exit site, or the interaction might lead to recycling of PGAP5 between the ER and the Golgi. Interacts with F2LR1/PAR2. Interacts with KDELR2/ERD2; the interaction is disrupted by KDELR2 ligand. Found in a complex composed at least of SURF4, TMED2 and TMED10. Associates with the presenilin-dependent gamma-secretase complex. Interacts with STX17; the interaction is direct. Interacts with IL-1; the interaction is direct. Interacts with RAB21 (active GTP-bound form); the interaction is indirect and regulates TMED10 abundance and localization at the Golgi.

It localises to the endoplasmic reticulum membrane. The protein localises to the endoplasmic reticulum-Golgi intermediate compartment membrane. Its subcellular location is the golgi apparatus membrane. The protein resides in the golgi apparatus. It is found in the cis-Golgi network membrane. It localises to the trans-Golgi network membrane. The protein localises to the cytoplasmic vesicle. Its subcellular location is the secretory vesicle membrane. The protein resides in the cell membrane. It is found in the melanosome. Its function is as follows. Cargo receptor involved in protein vesicular trafficking and quality control in the endoplasmic reticulum (ER) and Golgi. The p24 protein family is a group of transmembrane proteins that bind coat protein complex I/COPI and coat protein complex II/COPII involved in vesicular trafficking between the membranes. Acts at the lumenal side for incorporation of secretory cargo molecules into transport vesicles and involved in vesicle coat formation at the cytoplasmic side. Mainly functions in the early secretory pathway and cycles between the ER, ER-Golgi intermediate compartment (ERGIC) and Golgi, mediating cargo transport through COPI and COPII-coated vesicles. In COPII vesicle-mediated anterograde transport, involved in the transport of GPI-anchored proteins by acting together with TMED2 as their cargo receptor; the function specifically implies SEC24C and SEC24D of the COPII vesicle coat and lipid raft-like microdomains of the ER. Recognizes GPI anchors structural remodeled in the ER by the GPI inositol-deacylase/PGAP1 and the metallophosphoesterase MPPE1/PGAP5. In COPI vesicle-mediated retrograde transport, involved in the biogenesis of COPI vesicles and vesicle coat recruitment. Involved in trafficking of amyloid beta A4 protein and soluble APP-beta release (independent from the modulation of gamma-secretase activity). Involved in the KDELR2-mediated retrograde transport of the toxin A subunit (CTX-A-K63)together with COPI and the COOH terminus of KDELR2. On Golgi membranes, acts as a primary receptor for ARF1-GDP, a GTP-binding protein involved in COPI-vesicle formation. Increases coatomer-dependent GTPase-activating activity of ARFGAP2 which mediates the hydrolysis of ARF1-bound GTP and therefore modulates protein trafficking from the Golgi apparatus. Involved in the exocytic trafficking of G protein-coupled receptors F2LR1/PAR2 (trypsin and tryspin-like enzyme receptor), OPRM1 (opioid receptor) and P2RY4 (UTD and UDP receptor) from the Golgi to the plasma membrane, thus contributing to receptor resensitization. In addition to its cargo receptor activity, may also act as a protein channel after oligomerization, facilitating the post-translational entry of leaderless cytoplasmic cargo into the ERGIC. Involved in the translocation into ERGIC, the vesicle entry and the secretion of leaderless cargos (lacking the secretion signal sequence), including the mature form of interleukin 1/IL-1 family members, the alpha-crystallin B chain HSPB5, the carbohydrate-binding proteins galectin-1/LGALS1 and galectin-3/LGALS3, the microtubule-associated protein Tau/MAPT, and the annexin A1/ANXA1; the translocation process is dependent on cargo protein unfolding and enhanced by chaperones HSP90AB1 and HSP90B1/GRP9. Could also associates with the presenilin-dependent gamma-secretase complex in order to regulate gamma-cleavages of the amyloid beta A4 protein to yield amyloid-beta 40/Abeta40. In Pongo abelii (Sumatran orangutan), this protein is Transmembrane emp24 domain-containing protein 10 (TMED10).